A 257-amino-acid chain; its full sequence is Snake venom serine protease nikobin (257 aa).

A signal peptide spans 1–18 (MVLIRVLANLLLLQLSYA). A propeptide spanning residues 19 to 24 (QKSSEL) is cleaved from the precursor. The Peptidase S1 domain maps to 25-248 (VIGGDECNIN…YSDWIQSIIA (224 aa)). 6 disulfides stabilise this stretch: Cys-31–Cys-162, Cys-49–Cys-65, Cys-97–Cys-255, Cys-141–Cys-209, Cys-173–Cys-188, and Cys-199–Cys-224. Active-site charge relay system residues include His-64 and Asp-109. N-linked (GlcNAc...) asparagine glycans are attached at residues Asn-120 and Asn-121. The active-site Charge relay system is the Ser-203. Asn-250 is a glycosylation site (N-linked (GlcNAc...) asparagine).

It belongs to the peptidase S1 family. Snake venom subfamily. In terms of assembly, monomer. In terms of tissue distribution, expressed by the venom gland.

Its subcellular location is the secreted. Snake venom serine protease that may act in the hemostasis system of the prey. The sequence is that of Snake venom serine protease nikobin (sp-VN) from Vipera nikolskii (Nikolsky's adder).